The chain runs to 166 residues: Lipoprotein signal peptidase (166 aa).

The next 4 helical transmembrane spans lie at 11–31 (LNLV…LYIL), 42–62 (IYIT…AFGL), 69–89 (VIYN…IFMM), and 99–119 (FFAL…VYTA). Residues D122 and D140 contribute to the active site. Residues 133-153 (WFVFNVADIFITIGVFCLILV) form a helical membrane-spanning segment.

This sequence belongs to the peptidase A8 family.

It localises to the cell inner membrane. The enzyme catalyses Release of signal peptides from bacterial membrane prolipoproteins. Hydrolyzes -Xaa-Yaa-Zaa-|-(S,diacylglyceryl)Cys-, in which Xaa is hydrophobic (preferably Leu), and Yaa (Ala or Ser) and Zaa (Gly or Ala) have small, neutral side chains.. It functions in the pathway protein modification; lipoprotein biosynthesis (signal peptide cleavage). Its function is as follows. This protein specifically catalyzes the removal of signal peptides from prolipoproteins. This is Lipoprotein signal peptidase from Pelagibacter ubique (strain HTCC1062).